The following is a 170-amino-acid chain: Phosphopantetheine adenylyltransferase (170 aa).

Thr9 provides a ligand contact to substrate. ATP-binding positions include 9–10 and His17; that span reads TF. Positions 41, 73, and 87 each coordinate substrate. ATP-binding positions include 88 to 90, Glu98, and 123 to 129; these read GLR and YQFISGT.

This sequence belongs to the bacterial CoaD family. Homohexamer. Requires Mg(2+) as cofactor.

It localises to the cytoplasm. The catalysed reaction is (R)-4'-phosphopantetheine + ATP + H(+) = 3'-dephospho-CoA + diphosphate. The protein operates within cofactor biosynthesis; coenzyme A biosynthesis; CoA from (R)-pantothenate: step 4/5. In terms of biological role, reversibly transfers an adenylyl group from ATP to 4'-phosphopantetheine, yielding dephospho-CoA (dPCoA) and pyrophosphate. In Bordetella petrii (strain ATCC BAA-461 / DSM 12804 / CCUG 43448), this protein is Phosphopantetheine adenylyltransferase.